Reading from the N-terminus, the 189-residue chain is Probable nicotinate-nucleotide adenylyltransferase (189 aa).

This sequence belongs to the NadD family.

It carries out the reaction nicotinate beta-D-ribonucleotide + ATP + H(+) = deamido-NAD(+) + diphosphate. Its pathway is cofactor biosynthesis; NAD(+) biosynthesis; deamido-NAD(+) from nicotinate D-ribonucleotide: step 1/1. Functionally, catalyzes the reversible adenylation of nicotinate mononucleotide (NaMN) to nicotinic acid adenine dinucleotide (NaAD). The polypeptide is Probable nicotinate-nucleotide adenylyltransferase (Staphylococcus aureus (strain USA300 / TCH1516)).